Consider the following 500-residue polypeptide: uncharacterized protein (500 aa).

Low complexity predominate over residues 1–13; that stretch reads MEPSQRSGSFSSI. The segment at 1 to 23 is disordered; it reads MEPSQRSGSFSSISRRRSRVDSR. The residue at position 9 (S9) is a Phosphoserine. 12 helical membrane passes run 87–107, 126–146, 156–176, 183–203, 225–245, 261–281, 312–332, 351–371, 380–400, 408–428, 445–465, and 471–491; these read VSIA…AVAL, LVIG…LCFA, LYFR…LLYC, WIYL…TFLY, MNIL…GILA, VASW…IFFF, FLLF…NGYQ, GNFI…SSFL, IMLG…VLDA, VYFF…APLI, IVVQ…GGAI, and VGFI…LIFM.

The protein belongs to the major facilitator superfamily.

It is found in the golgi apparatus. The protein resides in the membrane. This is an uncharacterized protein from Schizosaccharomyces pombe (strain 972 / ATCC 24843) (Fission yeast).